The sequence spans 225 residues: MASGIVEGGGSLSDVYSSAKRILLKARDGIERLERFESSSMDSPDLASSVKRDITEVRSLCSNMDTLWRSIPVKSQRDLWRRKTEQVGEEAEYLNLSLEKYMSRNQRKMLEAKERADLLGRASGEGAHILQIFDEEAQAMSSVKNSKRMLEESFSSGVAILSKYAEQRDRLKSAQRKALDVLNTVGLSNSVLRLIERRNRVDTWIKYAGMIATLVILYLFIRWTR.

Residue Ala-2 is modified to N-acetylalanine. Over 2 to 200 the chain is Cytoplasmic; that stretch reads ASGIVEGGGS…VLRLIERRNR (199 aa). Residues 201 to 221 form a helical; Anchor for type IV membrane protein membrane-spanning segment; sequence VDTWIKYAGMIATLVILYLFI. Residues 222–225 lie on the Vesicular side of the membrane; it reads RWTR.

The protein belongs to the GOSR2 family.

The protein resides in the golgi apparatus membrane. In terms of biological role, involved in transport of proteins from the cis/medial-Golgi to the trans-Golgi network. The polypeptide is Membrin-11 (MEMB11) (Arabidopsis thaliana (Mouse-ear cress)).